The primary structure comprises 199 residues: MFEYCMARQFVAGVDEVGRGPLAGDVVAAAVILGEDHGIEGLADSKKITEKKRDALFDVIQERAVSFCIARASVEEIDELNILHASLLAMKRAVEGLNIQPQYIYVDGNKLPKWTYSAEAVVKGDSLVEEISAASILAKVTRDREMVALDEKYPGYGLAGHKGYPTKVHMDALKRLGPTIIHRKSFAPVRAAIEQMNLF.

One can recognise an RNase H type-2 domain in the interval 9-198; the sequence is QFVAGVDEVG…VRAAIEQMNL (190 aa). Positions 15, 16, and 107 each coordinate a divalent metal cation.

The protein belongs to the RNase HII family. Mn(2+) serves as cofactor. It depends on Mg(2+) as a cofactor.

It is found in the cytoplasm. The catalysed reaction is Endonucleolytic cleavage to 5'-phosphomonoester.. Endonuclease that specifically degrades the RNA of RNA-DNA hybrids. This is Ribonuclease HII from Saccharophagus degradans (strain 2-40 / ATCC 43961 / DSM 17024).